A 323-amino-acid chain; its full sequence is Tyrosine recombinase XerD (323 aa).

The 86-residue stretch at 21–106 (AEDDQAIQRF…TLRGFYALCL (86 aa)) folds into the Core-binding (CB) domain. The region spanning 127–317 (SLPKALTESQ…ARQHLQTLHA (191 aa)) is the Tyr recombinase domain. Active-site residues include R167, K191, H269, R272, and H295. Residue Y304 is the O-(3'-phospho-DNA)-tyrosine intermediate of the active site.

The protein belongs to the 'phage' integrase family. XerD subfamily. As to quaternary structure, forms a cyclic heterotetrameric complex composed of two molecules of XerC and two molecules of XerD.

It localises to the cytoplasm. Site-specific tyrosine recombinase, which acts by catalyzing the cutting and rejoining of the recombining DNA molecules. The XerC-XerD complex is essential to convert dimers of the bacterial chromosome into monomers to permit their segregation at cell division. It also contributes to the segregational stability of plasmids. The polypeptide is Tyrosine recombinase XerD (Xanthomonas campestris pv. campestris (strain ATCC 33913 / DSM 3586 / NCPPB 528 / LMG 568 / P 25)).